Here is a 419-residue protein sequence, read N- to C-terminus: LWamide neuropeptides (419 aa).

The N-terminal stretch at 1–27 is a signal peptide; sequence MEKEMRNLMLLVLLTVILDNGIGKCNA. The tract at residues 27–48 is disordered; sequence AKSEEDQDGNARNNRIDKNDDN. A propeptide spanning residues 28-104 is cleaved from the precursor; the sequence is KSEEDQDGNA…ENLDIDSTVQ (77 aa). Position 110 is a tryptophan amide (tryptophan 110). The propeptide occupies 113 to 140; the sequence is EADFDNTRAHDSAQISDEKQSGLWVGDA. The segment covering 120-132 has biased composition (basic and acidic residues); that stretch reads RAHDSAQISDEKQ. Positions 120–332 are disordered; it reads RAHDSAQISD…PGLWGRQVED (213 aa). Residue tryptophan 146 is modified to Tryptophan amide. A propeptide spanning residues 149 to 150 is cleaved from the precursor; sequence DA. A Tryptophan amide modification is found at tryptophan 156. Residues 159–160 constitute a propeptide that is removed on maturation; the sequence is DA. Tryptophan amide is present on tryptophan 166. A propeptide spanning residues 169–170 is cleaved from the precursor; the sequence is DA. A Tryptophan amide modification is found at tryptophan 176. The propeptide occupies 179–180; the sequence is DA. Tryptophan 186 bears the Tryptophan amide mark. The propeptide occupies 189-190; the sequence is DA. Residue tryptophan 196 is modified to Tryptophan amide. Residues 199–200 constitute a propeptide that is removed on maturation; that stretch reads DA. Tryptophan 206 bears the Tryptophan amide mark. Residues 209 to 210 constitute a propeptide that is removed on maturation; that stretch reads DA. Position 216 is a tryptophan amide (tryptophan 216). A propeptide spans 218-220 (seems to have a sequencing error or a mutation in position 218; Gly instead of Arg); that stretch reads GDA. A Tryptophan amide modification is found at tryptophan 226. Residues 229–230 constitute a propeptide that is removed on maturation; sequence DA. The residue at position 236 (tryptophan 236) is a Tryptophan amide. Positions 239-240 are excised as a propeptide; that stretch reads DA. At tryptophan 246 the chain carries Tryptophan amide. Positions 249-250 are excised as a propeptide; the sequence is DA. At tryptophan 256 the chain carries Tryptophan amide. The propeptide occupies 259 to 260; the sequence is DA. Residue tryptophan 266 is modified to Tryptophan amide. A propeptide spanning residues 269-270 is cleaved from the precursor; sequence DA. Tryptophan amide is present on tryptophan 276. Positions 279–280 are excised as a propeptide; the sequence is DT. The residue at position 286 (tryptophan 286) is a Tryptophan amide. A propeptide spanning residues 289 to 290 is cleaved from the precursor; it reads DA. Position 296 is a tryptophan amide (tryptophan 296). 2 consecutive propeptides follow at residues 299–300 and 309–320; these read DA and DNNVIKSRSDDA. The residue at position 326 (tryptophan 326) is a Tryptophan amide. Residues 329 to 419 constitute a propeptide that is removed on maturation; the sequence is QVEDGPTKIW…RRNNKKNNKF (91 aa).

It belongs to the LWamide neuropeptide family. In planula larvae, expressed in a narrow ring of ectodermal neurosensory cells around the widest circumference at the anterior of the larvae. In primary polyps, expression is confined to endodermal cells of the hypostome. In mature polyps, expression is strong in the epidermis from the tentacle level to the base of the polyp and weak in the gastrodermal cells in the apical hypostome.

Its subcellular location is the secreted. Its function is as follows. LWamide peptides may be involved in induction of metamorphosis. The polypeptide is LWamide neuropeptides (Hydractinia echinata (Snail fur)).